Reading from the N-terminus, the 1554-residue chain is Lysine-specific demethylase 5C (1554 aa).

Residues 14–55 (CPVFEPSWAEFRDPLGYIAKIRPIAEKSGICKIRPPADWQPP) enclose the JmjN domain. The region spanning 79–169 (TRVKLNYLDQ…IVYPYEMYQS (91 aa)) is the ARID domain. Residues 197–207 (LRQSVQPSKFN) are compositionally biased toward polar residues. The disordered stretch occupies residues 197–227 (LRQSVQPSKFNSYGRRAKRLQPDPEPTEEDI). Glycyl lysine isopeptide (Lys-Gly) (interchain with G-Cter in SUMO2) cross-links involve residues Lys-205, Lys-229, Lys-244, and Lys-274. The segment at 284 to 303 (ESTSPKTFLEGKEELSHSPE) is disordered. Ser-287 carries the post-translational modification Phosphoserine. Lys-295 is covalently cross-linked (Glycyl lysine isopeptide (Lys-Gly) (interchain with G-Cter in SUMO2)). Ser-301 and Ser-317 each carry phosphoserine. A PHD-type 1 zinc finger spans residues 326-372 (VCRMCSRGDEDDKLLLCDGCDDNYHIFCLLPPLPEIPKGVWRCPKCV). The region spanning 468-634 (EYATSGWNLN…AGRQCIEHYR (167 aa)) is the JmjC domain. Fe cation is bound by residues His-514, Asp-517, and His-602. Residues Ser-893 and Ser-897 each carry the phosphoserine modification. A Glycyl lysine isopeptide (Lys-Gly) (interchain with G-Cter in SUMO2) cross-link involves residue Lys-1127. A PHD-type 2 zinc finger spans residues 1187-1248 (ICVCGQVPAG…DTKFLCPLCM (62 aa)). 2 disordered regions span residues 1319–1364 (SKPE…EGSG) and 1437–1535 (AERH…APFS). Ser-1353 is subject to Phosphoserine. Positions 1442-1457 (SRTRGRALERRRRRKV) are enriched in basic residues. The span at 1458 to 1475 (DRGGEPDDPAREELEPKR) shows a compositional bias: basic and acidic residues. A compositionally biased stretch (acidic residues) spans 1482–1497 (EAEEVQEEEELEEETG).

This sequence belongs to the JARID1 histone demethylase family. As to quaternary structure, part of two distinct complexes, one containing E2F6, and the other containing REST. Interacts with ZMYND8. Fe(2+) is required as a cofactor.

Its subcellular location is the nucleus. It catalyses the reaction N(6),N(6),N(6)-trimethyl-L-lysyl(4)-[histone H3] + 3 2-oxoglutarate + 3 O2 = L-lysyl(4)-[histone H3] + 3 formaldehyde + 3 succinate + 3 CO2. Histone demethylase that specifically demethylates 'Lys-4' of histone H3, thereby playing a central role in histone code. Does not demethylate histone H3 'Lys-9', H3 'Lys-27', H3 'Lys-36', H3 'Lys-79' or H4 'Lys-20'. Demethylates trimethylated and dimethylated but not monomethylated H3 'Lys-4'. Participates in transcriptional repression of neuronal genes by recruiting histone deacetylases and REST at neuron-restrictive silencer elements. Represses the CLOCK-BMAL1 heterodimer-mediated transcriptional activation of the core clock component PER2. This chain is Lysine-specific demethylase 5C (Kdm5c), found in Mus musculus (Mouse).